Here is a 548-residue protein sequence, read N- to C-terminus: Chaperonin GroEL (548 aa).

ATP-binding positions include 30–33 (TLGP), Lys-51, 87–91 (DGTTT), Gly-415, and Asp-494.

This sequence belongs to the chaperonin (HSP60) family. Forms a cylinder of 14 subunits composed of two heptameric rings stacked back-to-back. Interacts with the co-chaperonin GroES.

Its subcellular location is the cytoplasm. It carries out the reaction ATP + H2O + a folded polypeptide = ADP + phosphate + an unfolded polypeptide.. Functionally, together with its co-chaperonin GroES, plays an essential role in assisting protein folding. The GroEL-GroES system forms a nano-cage that allows encapsulation of the non-native substrate proteins and provides a physical environment optimized to promote and accelerate protein folding. The sequence is that of Chaperonin GroEL from Oleispira antarctica.